The primary structure comprises 148 residues: Large ribosomal subunit protein bL9 (148 aa).

This sequence belongs to the bacterial ribosomal protein bL9 family.

Its function is as follows. Binds to the 23S rRNA. In Parafrankia sp. (strain EAN1pec), this protein is Large ribosomal subunit protein bL9.